Consider the following 271-residue polypeptide: ATP synthase subunit a (271 aa).

Helical transmembrane passes span 38-58 (FWTL…LFLV), 100-120 (LIAP…LMDL), 146-166 (DVNI…FYSI), 220-240 (LIFI…LNVP), and 242-262 (AIFH…LTIV).

The protein belongs to the ATPase A chain family. As to quaternary structure, F-type ATPases have 2 components, CF(1) - the catalytic core - and CF(0) - the membrane proton channel. CF(1) has five subunits: alpha(3), beta(3), gamma(1), delta(1), epsilon(1). CF(0) has three main subunits: a(1), b(2) and c(9-12). The alpha and beta chains form an alternating ring which encloses part of the gamma chain. CF(1) is attached to CF(0) by a central stalk formed by the gamma and epsilon chains, while a peripheral stalk is formed by the delta and b chains.

Its subcellular location is the cell inner membrane. Functionally, key component of the proton channel; it plays a direct role in the translocation of protons across the membrane. This Salmonella arizonae (strain ATCC BAA-731 / CDC346-86 / RSK2980) protein is ATP synthase subunit a.